Here is a 634-residue protein sequence, read N- to C-terminus: Glutamyl-tRNA(Gln) amidotransferase subunit E (634 aa).

This sequence belongs to the GatB/GatE family. GatE subfamily. Heterodimer of GatD and GatE.

It carries out the reaction L-glutamyl-tRNA(Gln) + L-glutamine + ATP + H2O = L-glutaminyl-tRNA(Gln) + L-glutamate + ADP + phosphate + H(+). Its function is as follows. Allows the formation of correctly charged Gln-tRNA(Gln) through the transamidation of misacylated Glu-tRNA(Gln) in organisms which lack glutaminyl-tRNA synthetase. The reaction takes place in the presence of glutamine and ATP through an activated gamma-phospho-Glu-tRNA(Gln). The GatDE system is specific for glutamate and does not act on aspartate. In Sulfolobus acidocaldarius (strain ATCC 33909 / DSM 639 / JCM 8929 / NBRC 15157 / NCIMB 11770), this protein is Glutamyl-tRNA(Gln) amidotransferase subunit E.